The primary structure comprises 161 residues: 2-C-methyl-D-erythritol 2,4-cyclodiphosphate synthase (161 aa).

Asp10 and His12 together coordinate a divalent metal cation. Residues 10-12 (DVH) and 36-37 (HS) each bind 4-CDP-2-C-methyl-D-erythritol 2-phosphate. His44 lines the a divalent metal cation pocket. 4-CDP-2-C-methyl-D-erythritol 2-phosphate-binding positions include 58–60 (DIG), 63–67 (FPDTD), 102–108 (AQVPKMA), 134–137 (TTTE), Phe141, and Arg144.

It belongs to the IspF family. As to quaternary structure, homotrimer. A divalent metal cation serves as cofactor.

It catalyses the reaction 4-CDP-2-C-methyl-D-erythritol 2-phosphate = 2-C-methyl-D-erythritol 2,4-cyclic diphosphate + CMP. The protein operates within isoprenoid biosynthesis; isopentenyl diphosphate biosynthesis via DXP pathway; isopentenyl diphosphate from 1-deoxy-D-xylulose 5-phosphate: step 4/6. Functionally, involved in the biosynthesis of isopentenyl diphosphate (IPP) and dimethylallyl diphosphate (DMAPP), two major building blocks of isoprenoid compounds. Catalyzes the conversion of 4-diphosphocytidyl-2-C-methyl-D-erythritol 2-phosphate (CDP-ME2P) to 2-C-methyl-D-erythritol 2,4-cyclodiphosphate (ME-CPP) with a corresponding release of cytidine 5-monophosphate (CMP). The chain is 2-C-methyl-D-erythritol 2,4-cyclodiphosphate synthase from Shewanella baltica (strain OS223).